Reading from the N-terminus, the 157-residue chain is Small ribosomal subunit protein bS16 (157 aa).

Basic and acidic residues predominate over residues 125–141; that stretch reads KRKAAKKAAEEAAAKEA. A disordered region spans residues 125 to 157; the sequence is KRKAAKKAAEEAAAKEAEAEEAAEDKAEEESAE. A compositionally biased stretch (acidic residues) spans 142 to 157; sequence EAEEAAEDKAEEESAE.

This sequence belongs to the bacterial ribosomal protein bS16 family.

This chain is Small ribosomal subunit protein bS16, found in Corynebacterium kroppenstedtii (strain DSM 44385 / JCM 11950 / CIP 105744 / CCUG 35717).